Consider the following 708-residue polypeptide: Nicastrin (708 aa).

Positions 1-34 are cleaved as a signal peptide; it reads MATARGGSGPDPGSRGLLLLSFSVVLAGLCGGNS. The Lumenal segment spans residues 35–668; that stretch reads VERKIYIPLN…IFLIASKELE (634 aa). Residues N44, N54, and N128 are each glycosylated (N-linked (GlcNAc...) asparagine). C49 and C61 are disulfide-bonded. A disulfide bridge links C139 with C158. 2 N-linked (GlcNAc...) asparagine glycosylation sites follow: N186 and N203. Disulfide bonds link C194–C212 and C229–C247. N-linked (GlcNAc...) asparagine glycans are attached at residues N263, N386, N434, N463, N507, N529, N561, N572, N579, N593, and N611. A disulfide bond links C585 and C619. The helical transmembrane segment at 669 to 689 threads the bilayer; sequence FITLIVGFSILVFSLIVTYCI. At 690–708 the chain is on the cytoplasmic side; sequence NAKADVLFVAPREPGAVSY.

This sequence belongs to the nicastrin family. Component of the gamma-secretase complex. The functional gamma-secretase complex is composed of at least four polypeptides: a presenilin homodimer (PSEN1 or PSEN2), nicastrin (NCSTN), APH1 (APH1A or APH1B) and PEN2. Binds to proteolytic processed C-terminal fragments C83 and C99 of the amyloid precursor protein (APP). Interacts with PSEN1 and PSEN2. N-glycosylated.

The protein resides in the membrane. Its subcellular location is the cytoplasmic vesicle membrane. It is found in the melanosome. Essential subunit of the gamma-secretase complex, an endoprotease complex that catalyzes the intramembrane cleavage of integral membrane proteins such as Notch receptors and APP (amyloid-beta precursor protein). The gamma-secretase complex plays a role in Notch and Wnt signaling cascades and regulation of downstream processes via its role in processing key regulatory proteins, and by regulating cytosolic CTNNB1 levels. In Rattus norvegicus (Rat), this protein is Nicastrin (Ncstn).